The sequence spans 250 residues: Probable transcriptional regulatory protein SCO1521 (250 aa).

It belongs to the TACO1 family.

It localises to the cytoplasm. This is Probable transcriptional regulatory protein SCO1521 from Streptomyces coelicolor (strain ATCC BAA-471 / A3(2) / M145).